The sequence spans 52 residues: Sperm protamine P1 (52 aa).

Belongs to the protamine P1 family. In terms of assembly, cross-linked by interchain disulfide bonds around the DNA-helix. In terms of tissue distribution, testis.

The protein resides in the nucleus. Its subcellular location is the chromosome. Protamines substitute for histones in the chromatin of sperm during the haploid phase of spermatogenesis. They compact sperm DNA into a highly condensed, stable and inactive complex. The chain is Sperm protamine P1 (PRM1) from Alouatta seniculus (Red howler monkey).